We begin with the raw amino-acid sequence, 124 residues long: KETAAAKFQRQHMDSSTSSASSSNYCNQMMKSRNMTSDRCKPVNTFVHESLADVQAVCSQENVACKNGQTNCYQSYSTMSITDCRETGSSKYPNCAYKTTQANKHIIVACEGNPYVPVHYDASV.

Residues 1–24 are disordered; sequence KETAAAKFQRQHMDSSTSSASSSN. Substrate-binding residues include K7 and R10. H12 acts as the Proton acceptor in catalysis. Cystine bridges form between C26–C84, C40–C95, C58–C110, and C65–C72. Residue N34 is glycosylated (N-linked (GlcNAc...) asparagine; in river-breed only). Substrate is bound by residues 41 to 45, K66, and R85; that span reads KPVNT. H119 functions as the Proton donor in the catalytic mechanism.

The protein belongs to the pancreatic ribonuclease family. Monomer. Interacts with and forms tight 1:1 complexes with RNH1. Dimerization of two such complexes may occur. Interaction with RNH1 inhibits this protein. Swamp breed ribonuclease do not bind carbohydrate, but there is evidence of a polymorphic form that does. Pancreas.

It localises to the secreted. It carries out the reaction an [RNA] containing cytidine + H2O = an [RNA]-3'-cytidine-3'-phosphate + a 5'-hydroxy-ribonucleotide-3'-[RNA].. It catalyses the reaction an [RNA] containing uridine + H2O = an [RNA]-3'-uridine-3'-phosphate + a 5'-hydroxy-ribonucleotide-3'-[RNA].. Endonuclease that catalyzes the cleavage of RNA on the 3' side of pyrimidine nucleotides. Acts on single-stranded and double-stranded RNA. This chain is Ribonuclease pancreatic (RNASE1), found in Bubalus bubalis (Domestic water buffalo).